The chain runs to 66 residues: SGKGKGDLCTAACKNEPCQCGSKCQCGEGCACASCKTCNCTSDGCKCGKECTGAASCKCNSSCSCK.

N-acetylserine is present on serine 1. Residues cysteine 9, cysteine 13, cysteine 18, cysteine 20, cysteine 24, cysteine 26, cysteine 30, cysteine 32, cysteine 35, cysteine 38, cysteine 40, cysteine 45, cysteine 47, cysteine 51, cysteine 57, cysteine 59, cysteine 63, and cysteine 65 each coordinate Cd(2+).

It belongs to the metallothionein superfamily. Type 2 family.

In terms of biological role, the metallothioneins are involved in the cellular sequestration of toxic metal ions and regulation of essential trace elements. The chain is Metallothionein from Arianta arbustorum (Land snail).